We begin with the raw amino-acid sequence, 384 residues long: Putative glutamate--cysteine ligase 2 (384 aa).

It belongs to the glutamate--cysteine ligase type 2 family. YbdK subfamily.

The enzyme catalyses L-cysteine + L-glutamate + ATP = gamma-L-glutamyl-L-cysteine + ADP + phosphate + H(+). Functionally, ATP-dependent carboxylate-amine ligase which exhibits weak glutamate--cysteine ligase activity. The protein is Putative glutamate--cysteine ligase 2 of Ruegeria pomeroyi (strain ATCC 700808 / DSM 15171 / DSS-3) (Silicibacter pomeroyi).